A 295-amino-acid polypeptide reads, in one-letter code: NAD kinase (295 aa).

Asp73 (proton acceptor) is an active-site residue. NAD(+) contacts are provided by residues 73 to 74 (DG), Arg78, 146 to 147 (NE), Lys157, Arg174, Asp176, and 187 to 192 (TAYSLS).

This sequence belongs to the NAD kinase family. A divalent metal cation serves as cofactor.

It localises to the cytoplasm. It catalyses the reaction NAD(+) + ATP = ADP + NADP(+) + H(+). In terms of biological role, involved in the regulation of the intracellular balance of NAD and NADP, and is a key enzyme in the biosynthesis of NADP. Catalyzes specifically the phosphorylation on 2'-hydroxyl of the adenosine moiety of NAD to yield NADP. This chain is NAD kinase, found in Wigglesworthia glossinidia brevipalpis.